Reading from the N-terminus, the 149-residue chain is Large ribosomal subunit protein bL9 (149 aa).

This sequence belongs to the bacterial ribosomal protein bL9 family.

Binds to the 23S rRNA. In Proteus mirabilis (strain HI4320), this protein is Large ribosomal subunit protein bL9.